The chain runs to 223 residues: Small ribosomal subunit protein uS3 (223 aa).

The region spanning 39 to 107 (VREFLKQKLK…PVQVSVEEIR (69 aa)) is the KH type-2 domain.

The protein belongs to the universal ribosomal protein uS3 family. As to quaternary structure, part of the 30S ribosomal subunit. Forms a tight complex with proteins S10 and S14.

Functionally, binds the lower part of the 30S subunit head. Binds mRNA in the 70S ribosome, positioning it for translation. The polypeptide is Small ribosomal subunit protein uS3 (Methylococcus capsulatus (strain ATCC 33009 / NCIMB 11132 / Bath)).